Consider the following 371-residue polypeptide: MKPSATSSDLATGPQARAVWPLSEPALTYFPDVRFATSDRDLTAGAAPTPQSAAMVDDQPHVPVLLDRCVELLAPALTREGATLVDATLGAGGHSERFLTDFPGLRLIGLDRDPDALRIAGERLAPFADRITLVRTRYDGIADAVRDAAGGSVDAILFDLGVSSMQLDRVERGFSYSTDAPLDMRMDSGADLTAAQVLNSYDERALARVLREYGEEKFAGRIAAFIVRRRAVTPFTTTGELVELLYDAIPAPARRTGGHPAKRTFQALRIEVNAELESLRSAIPAALQALRPHGRLAVMAYQSLEDRIVKTAFAAATASRTPPGLPVELPGHGPEFVALTRGAERADAEEIERNPRSAPVRLRAVEKVGGE.

S-adenosyl-L-methionine is bound by residues 92–94, Asp111, Tyr138, Asp159, and Gln166; that span reads GGH.

It belongs to the methyltransferase superfamily. RsmH family.

The protein localises to the cytoplasm. The catalysed reaction is cytidine(1402) in 16S rRNA + S-adenosyl-L-methionine = N(4)-methylcytidine(1402) in 16S rRNA + S-adenosyl-L-homocysteine + H(+). Specifically methylates the N4 position of cytidine in position 1402 (C1402) of 16S rRNA. In Mycolicibacterium gilvum (strain PYR-GCK) (Mycobacterium gilvum (strain PYR-GCK)), this protein is Ribosomal RNA small subunit methyltransferase H.